A 642-amino-acid polypeptide reads, in one-letter code: Sodium- and chloride-dependent neutral and basic amino acid transporter B(0+) (642 aa).

The Cytoplasmic portion of the chain corresponds to 1-44 (MDKLKCPSFFKCREKEKVSASSENFHVGENDENQDRGNWSKKSD). 3 consecutive transmembrane segments (helical) span residues 45–65 (YLLS…FPYL), 72–92 (GAFL…LFFL), and 110–130 (ILPL…FVTI). Over 131–234 (YYNVIIAYSL…RSSGMNETGV (104 aa)) the chain is Extracellular. Residues N155, N163, N174, N189, N197, N202, and N230 are each glycosylated (N-linked (GlcNAc...) asparagine). 2 helical membrane-spanning segments follow: residues 235–255 (IVWY…AALF) and 261–281 (SGKV…ILLV). A glycan (N-linked (GlcNAc...) asparagine) is linked at N302. A run of 7 helical transmembrane segments spans residues 315–335 (AATQ…ALSS), 348–368 (IVVC…IFSI), 399–419 (LAQL…LLTL), 450–477 (ITLG…VHLI), 480–500 (FCAG…IIWI), 528–548 (CWFV…LVQF), and 563–583 (VALG…MAII). Over 584–642 (KIIQAKGNIFQRLISCCRPASNWGPYLEQHRGERYKDMVDPKKEADHEIPTVSGSRKPE) the chain is Cytoplasmic. The span at 622 to 632 (VDPKKEADHEI) shows a compositional bias: basic and acidic residues. The segment at 622 to 642 (VDPKKEADHEIPTVSGSRKPE) is disordered.

Belongs to the sodium:neurotransmitter symporter (SNF) (TC 2.A.22) family. SLC6A14 subfamily. Levels are highest in adult and fetal lung, in trachea and salivary gland. Lower levels detected in mammary gland, stomach and pituitary gland, and very low levels in colon, uterus, prostate and testis.

It localises to the membrane. The protein localises to the apical cell membrane. The catalysed reaction is glycine(out) + chloride(out) + 2 Na(+)(out) = glycine(in) + chloride(in) + 2 Na(+)(in). It catalyses the reaction L-leucine(out) + chloride(out) + 2 Na(+)(out) = L-leucine(in) + chloride(in) + 2 Na(+)(in). It carries out the reaction L-glutamine(out) + chloride(out) + 2 Na(+)(out) = L-glutamine(in) + chloride(in) + 2 Na(+)(in). The enzyme catalyses L-arginine(out) + chloride(out) + 2 Na(+)(out) = L-arginine(in) + chloride(in) + 2 Na(+)(in). The catalysed reaction is (R)-carnitine(out) + chloride(out) + 2 Na(+)(out) = (R)-carnitine(in) + chloride(in) + 2 Na(+)(in). It catalyses the reaction O-butanoyl-(R)-carnitine(out) + chloride(out) + 2 Na(+)(out) = O-butanoyl-(R)-carnitine(in) + chloride(in) + 2 Na(+)(in). It carries out the reaction O-propanoyl-(R)-carnitine(out) + chloride(out) + 2 Na(+)(out) = O-propanoyl-(R)-carnitine(in) + chloride(in) + 2 Na(+)(in). The enzyme catalyses L-isoleucine(out) + chloride(out) + 2 Na(+)(out) = L-isoleucine(in) + chloride(in) + 2 Na(+)(in). The catalysed reaction is L-methionine(out) + chloride(out) + 2 Na(+)(out) = L-methionine(in) + chloride(in) + 2 Na(+)(in). It catalyses the reaction L-valine(out) + chloride(out) + 2 Na(+)(out) = L-valine(in) + chloride(in) + 2 Na(+)(in). It carries out the reaction L-alanine(out) + chloride(out) + 2 Na(+)(out) = L-alanine(in) + chloride(in) + 2 Na(+)(in). The enzyme catalyses L-serine(out) + chloride(out) + 2 Na(+)(out) = L-serine(in) + chloride(in) + 2 Na(+)(in). The catalysed reaction is L-cysteine(out) + chloride(out) + 2 Na(+)(out) = L-cysteine(in) + chloride(in) + 2 Na(+)(in). It catalyses the reaction L-asparagine(out) + chloride(out) + 2 Na(+)(out) = L-asparagine(in) + chloride(in) + 2 Na(+)(in). It carries out the reaction L-threonine(out) + chloride(out) + 2 Na(+)(out) = L-threonine(in) + chloride(in) + 2 Na(+)(in). The enzyme catalyses L-phenylalanine(out) + chloride(out) + 2 Na(+)(out) = L-phenylalanine(in) + chloride(in) + 2 Na(+)(in). The catalysed reaction is L-tryptophan(out) + chloride(out) + 2 Na(+)(out) = L-tryptophan(in) + chloride(in) + 2 Na(+)(in). It catalyses the reaction L-tyrosine(out) + chloride(out) + 2 Na(+)(out) = L-tyrosine(in) + chloride(in) + 2 Na(+)(in). It carries out the reaction L-histidine(out) + chloride(out) + 2 Na(+)(out) = L-histidine(in) + chloride(in) + 2 Na(+)(in). The enzyme catalyses L-lysine(out) + chloride(out) + 2 Na(+)(out) = L-lysine(in) + chloride(in) + 2 Na(+)(in). The catalysed reaction is beta-alanine(out) + chloride(out) + 2 Na(+)(out) = beta-alanine(in) + chloride(in) + 2 Na(+)(in). In terms of biological role, amino acid transporter that plays an important role in the absorption of amino acids in the intestinal tract. Mediates the uptake of a broad range of neutral and cationic amino acids (with the exception of proline) in a Na(+)/Cl(-)-dependent manner. Transports non-alpha-amino acids such as beta-alanine with low affinity, and has a higher affinity for dipolar and cationic amino acids such as leucine and lysine. Can also transport carnitine, butirylcarnitine and propionylcarnitine coupled to the transmembrane gradients of Na(+) and Cl(-). The polypeptide is Sodium- and chloride-dependent neutral and basic amino acid transporter B(0+) (Homo sapiens (Human)).